We begin with the raw amino-acid sequence, 516 residues long: 1-pyrroline-5-carboxylate dehydrogenase (516 aa).

Catalysis depends on residues Glu287 and Cys321.

The protein belongs to the aldehyde dehydrogenase family. RocA subfamily.

It carries out the reaction L-glutamate 5-semialdehyde + NAD(+) + H2O = L-glutamate + NADH + 2 H(+). The protein operates within amino-acid degradation; L-proline degradation into L-glutamate; L-glutamate from L-proline: step 2/2. The sequence is that of 1-pyrroline-5-carboxylate dehydrogenase from Bacillus licheniformis (strain ATCC 14580 / DSM 13 / JCM 2505 / CCUG 7422 / NBRC 12200 / NCIMB 9375 / NCTC 10341 / NRRL NRS-1264 / Gibson 46).